The chain runs to 78 residues: UPF0349 protein Sca_0544 (78 aa).

This sequence belongs to the UPF0349 family.

This Staphylococcus carnosus (strain TM300) protein is UPF0349 protein Sca_0544.